The sequence spans 131 residues: Small ribosomal subunit protein uS8 (131 aa).

It belongs to the universal ribosomal protein uS8 family. In terms of assembly, part of the 30S ribosomal subunit. Contacts proteins S5 and S12.

Functionally, one of the primary rRNA binding proteins, it binds directly to 16S rRNA central domain where it helps coordinate assembly of the platform of the 30S subunit. This chain is Small ribosomal subunit protein uS8, found in Finegoldia magna (strain ATCC 29328 / DSM 20472 / WAL 2508) (Peptostreptococcus magnus).